A 169-amino-acid chain; its full sequence is Myosin regulatory light chain 11 (169 aa).

Position 2 is a n,N,N-trimethylalanine (alanine 2). Serine 15 and serine 16 each carry phosphoserine. Residues threonine 25 and threonine 35 each carry the phosphothreonine modification. An EF-hand 1 domain is found at 25 to 60 (TQIQEFKEAFTVIDQNRDGIIDKEDLRDTFAAMGRL). Residues aspartate 38, asparagine 40, aspartate 42, and aspartate 49 each coordinate Ca(2+). Serine 75 carries the post-translational modification Phosphoserine. 2 EF-hand domains span residues 95–130 (DPED…QCDR) and 131–166 (FSQE…GDAK). Phosphothreonine is present on threonine 101.

As to quaternary structure, myosin is a hexamer of 2 heavy chains and 4 light chains.

Myosin regulatory subunit that plays an essential to maintain muscle integrity during early development. Plays a role in muscle contraction. The protein is Myosin regulatory light chain 11 (Myl11) of Rattus norvegicus (Rat).